Reading from the N-terminus, the 239-residue chain is Serine protease SplC (239 aa).

The N-terminal stretch at Met1–Ala36 is a signal peptide. Residues His75, Asp113, and Ser193 each act as charge relay system in the active site.

Belongs to the peptidase S1B family.

The protein resides in the secreted. This is Serine protease SplC (splC) from Staphylococcus aureus.